A 276-amino-acid polypeptide reads, in one-letter code: tRNA (guanine-N(7)-)-methyltransferase (276 aa).

A disordered region spans residues 1–23; it reads MRPDPAPLDPTDASPAQARRHQP. S-adenosyl-L-methionine contacts are provided by Glu-103, Glu-128, Asp-155, and Asp-178. Asp-178 is a catalytic residue. Substrate-binding positions include Lys-182, Asp-214, and 252–255; that span reads TRYE.

Belongs to the class I-like SAM-binding methyltransferase superfamily. TrmB family.

It catalyses the reaction guanosine(46) in tRNA + S-adenosyl-L-methionine = N(7)-methylguanosine(46) in tRNA + S-adenosyl-L-homocysteine. Its pathway is tRNA modification; N(7)-methylguanine-tRNA biosynthesis. In terms of biological role, catalyzes the formation of N(7)-methylguanine at position 46 (m7G46) in tRNA. In Cutibacterium acnes (strain DSM 16379 / KPA171202) (Propionibacterium acnes), this protein is tRNA (guanine-N(7)-)-methyltransferase.